The following is a 166-amino-acid chain: Orofacial cleft 1 candidate gene 1 protein homolog (166 aa).

The segment at 1–22 (MDKEKFQQKAVKQTKQKKSTSA) is disordered.

The chain is Orofacial cleft 1 candidate gene 1 protein homolog (Ofcc1) from Mus musculus (Mouse).